Reading from the N-terminus, the 325-residue chain is Tagatose 1,6-diphosphate aldolase 1 (325 aa).

The protein belongs to the aldolase LacD family.

It catalyses the reaction D-tagatofuranose 1,6-bisphosphate = D-glyceraldehyde 3-phosphate + dihydroxyacetone phosphate. The protein operates within carbohydrate metabolism; D-tagatose 6-phosphate degradation; D-glyceraldehyde 3-phosphate and glycerone phosphate from D-tagatose 6-phosphate: step 2/2. The chain is Tagatose 1,6-diphosphate aldolase 1 from Streptococcus agalactiae serotype III (strain NEM316).